The following is a 474-amino-acid chain: 4-aminobutyrate aminotransferase (474 aa).

Polar residues predominate over residues 1–13 (MSSTATVTESTHF). Positions 1–31 (MSSTATVTESTHFFPNEPQGPSIKTETIPGP) are disordered. 142–143 (GS) serves as a coordination point for pyridoxal 5'-phosphate. Residue Arg-199 participates in substrate binding. Lys-333 carries the N6-(pyridoxal phosphate)lysine modification. A pyridoxal 5'-phosphate-binding site is contributed by Thr-357.

It belongs to the class-III pyridoxal-phosphate-dependent aminotransferase family. In terms of assembly, homodimer. It depends on pyridoxal 5'-phosphate as a cofactor.

It localises to the cytoplasm. It carries out the reaction 4-aminobutanoate + 2-oxoglutarate = succinate semialdehyde + L-glutamate. Required for the degradation of gamma-aminobutyric acid (GABA), which is important for utilization of GABA as nitrogen source. Deaminates GABA to succinate-semialdehyde, which in turn is converted to succinate by the succinate semialdehyde dehydrogenase. Cannot transaminate beta-alanine (BAL). This chain is 4-aminobutyrate aminotransferase (uga1), found in Schizosaccharomyces pombe (strain 972 / ATCC 24843) (Fission yeast).